Reading from the N-terminus, the 707-residue chain is Leucine-rich repeat neuronal protein 3 (707 aa).

The signal sequence occupies residues 1–22 (MKDAPLQIHVLLGLAITALVQA). The region spanning 23-69 (GDKKVDCPQLCTCEIRPWFTPRSIYMEASTVDCNDLGLLNFPARLPA) is the LRRNT domain. The Extracellular segment spans residues 23-626 (GDKKVDCPQL…DGKENGKSHT (604 aa)). LRR repeat units follow at residues 70–91 (DTQI…TDFP), 93–114 (NLTG…NVQK), 117–138 (QLLS…CLYG), 141–162 (NLQE…AFVG), 165–186 (NLLR…WFEA), 189–210 (NLEI…NFQP), 213–234 (KLRS…ALVG), 237–258 (NLES…ALQK), 261–282 (NLKF…DFSN), 285–304 (HLKE…DSLA), 310–332 (DLRK…AFFR), and 335–358 (KLES…ESLP). Asparagine 93 and asparagine 103 each carry an N-linked (GlcNAc...) asparagine glycan. N-linked (GlcNAc...) asparagine glycosylation is present at asparagine 223. The LRRCT domain maps to 368–421 (NPIRCDCVIRWINMNKTNIRFMEPDSLFCVDPPEFQGQNVRQVHFRDMMEICLP). A glycan (N-linked (GlcNAc...) asparagine) is linked at asparagine 382. Residues 421–514 (PLIAPESFPS…DLKSIMIKVG (94 aa)) enclose the Ig-like C2-type domain. Residues cysteine 444 and cysteine 496 are joined by a disulfide bond. Asparagine 522, asparagine 579, and asparagine 608 each carry an N-linked (GlcNAc...) asparagine glycan. The 92-residue stretch at 523–614 (GSLNIKIRDI…QCVNVTTKSL (92 aa)) folds into the Fibronectin type-III domain. The chain crosses the membrane as a helical span at residues 627–647 (VFVACVGGLLGIIGVMCLFGC). Over 648 to 707 (VSQEGNCENEHSYTVNHCHKPTLAFSELYPPLINLWESSKEKPASLEVKATAIGVPTSMS) the chain is Cytoplasmic.

The protein localises to the membrane. The protein is Leucine-rich repeat neuronal protein 3 (Lrrn3) of Rattus norvegicus (Rat).